A 480-amino-acid chain; its full sequence is Aspartyl/glutamyl-tRNA(Asn/Gln) amidotransferase subunit B (480 aa).

This sequence belongs to the GatB/GatE family. GatB subfamily. As to quaternary structure, heterotrimer of A, B and C subunits.

The enzyme catalyses L-glutamyl-tRNA(Gln) + L-glutamine + ATP + H2O = L-glutaminyl-tRNA(Gln) + L-glutamate + ADP + phosphate + H(+). It catalyses the reaction L-aspartyl-tRNA(Asn) + L-glutamine + ATP + H2O = L-asparaginyl-tRNA(Asn) + L-glutamate + ADP + phosphate + 2 H(+). Allows the formation of correctly charged Asn-tRNA(Asn) or Gln-tRNA(Gln) through the transamidation of misacylated Asp-tRNA(Asn) or Glu-tRNA(Gln) in organisms which lack either or both of asparaginyl-tRNA or glutaminyl-tRNA synthetases. The reaction takes place in the presence of glutamine and ATP through an activated phospho-Asp-tRNA(Asn) or phospho-Glu-tRNA(Gln). The protein is Aspartyl/glutamyl-tRNA(Asn/Gln) amidotransferase subunit B of Streptococcus pneumoniae (strain P1031).